The sequence spans 209 residues: Holliday junction branch migration complex subunit RuvA (209 aa).

The tract at residues Met1 to Ser70 is domain I. Residues Thr71–Thr149 are domain II. Positions Pro150–Ile160 are flexible linker. The segment at Ile160–Ser209 is domain III.

The protein belongs to the RuvA family. In terms of assembly, homotetramer. Forms an RuvA(8)-RuvB(12)-Holliday junction (HJ) complex. HJ DNA is sandwiched between 2 RuvA tetramers; dsDNA enters through RuvA and exits via RuvB. An RuvB hexamer assembles on each DNA strand where it exits the tetramer. Each RuvB hexamer is contacted by two RuvA subunits (via domain III) on 2 adjacent RuvB subunits; this complex drives branch migration. In the full resolvosome a probable DNA-RuvA(4)-RuvB(12)-RuvC(2) complex forms which resolves the HJ.

The protein resides in the cytoplasm. Functionally, the RuvA-RuvB-RuvC complex processes Holliday junction (HJ) DNA during genetic recombination and DNA repair, while the RuvA-RuvB complex plays an important role in the rescue of blocked DNA replication forks via replication fork reversal (RFR). RuvA specifically binds to HJ cruciform DNA, conferring on it an open structure. The RuvB hexamer acts as an ATP-dependent pump, pulling dsDNA into and through the RuvAB complex. HJ branch migration allows RuvC to scan DNA until it finds its consensus sequence, where it cleaves and resolves the cruciform DNA. The polypeptide is Holliday junction branch migration complex subunit RuvA (Gloeothece citriformis (strain PCC 7424) (Cyanothece sp. (strain PCC 7424))).